Consider the following 206-residue polypeptide: Large ribosomal subunit protein uL4 (206 aa).

Residues 48–97 form a disordered region; it reads THAVKNRSLVSGGGKKPWKQKHTGRARQGSTRASQWVGGGKAMGPKPRDY. Residues 63–72 are compositionally biased toward basic residues; that stretch reads KPWKQKHTGR.

It belongs to the universal ribosomal protein uL4 family. As to quaternary structure, part of the 50S ribosomal subunit.

One of the primary rRNA binding proteins, this protein initially binds near the 5'-end of the 23S rRNA. It is important during the early stages of 50S assembly. It makes multiple contacts with different domains of the 23S rRNA in the assembled 50S subunit and ribosome. Functionally, forms part of the polypeptide exit tunnel. The protein is Large ribosomal subunit protein uL4 of Anaeromyxobacter sp. (strain K).